Consider the following 503-residue polypeptide: Probable apyrase 4 (503 aa).

A compositionally biased stretch (low complexity) spans 1–14; sequence MQRSNARSRSNINS. The tract at residues 1–39 is disordered; the sequence is MQRSNARSRSNINSDMVDPPEVQTSPGNHRSSPSTAAKP. The Cytoplasmic segment spans residues 1–45; it reads MQRSNARSRSNINSDMVDPPEVQTSPGNHRSSPSTAAKPKSKRTK. Residues 46-66 form a helical; Signal-anchor for type II membrane protein membrane-spanning segment; that stretch reads SIIFVIVACVTIALGLLFIGY. The Extracellular portion of the chain corresponds to 67 to 503; that stretch reads SILRSGRNRR…DLSNVAKYKI (437 aa). 83-93 lines the ATP pocket; sequence VIIDGGSSGTR. The active-site Proton acceptor is glutamate 206. An ATP-binding site is contributed by 230–240; sequence GIVELGGASAQ. Residues asparagine 261, asparagine 293, and asparagine 338 are each glycosylated (N-linked (GlcNAc...) asparagine).

This sequence belongs to the GDA1/CD39 NTPase family. Requires Ca(2+) as cofactor. As to expression, expressed both in the primary root and lateral root but not in the rosette leaves.

It is found in the membrane. The catalysed reaction is a ribonucleoside 5'-triphosphate + 2 H2O = a ribonucleoside 5'-phosphate + 2 phosphate + 2 H(+). Its function is as follows. Catalyzes the hydrolysis of phosphoanhydride bonds of nucleoside tri- and di-phosphates. The polypeptide is Probable apyrase 4 (APY4) (Arabidopsis thaliana (Mouse-ear cress)).